The primary structure comprises 181 residues: NAD(P)H-quinone oxidoreductase subunit 6, chloroplastic (181 aa).

Helical transmembrane passes span 13 to 33, 35 to 55, 64 to 84, 98 to 118, and 152 to 172; these read PILY…VFFG, IIYS…LYLL, AQIL…IMLI, FGDI…IIMI, and LLPF…AITI.

The protein belongs to the complex I subunit 6 family. In terms of assembly, NDH is composed of at least 16 different subunits, 5 of which are encoded in the nucleus.

It is found in the plastid. The protein localises to the chloroplast thylakoid membrane. It carries out the reaction a plastoquinone + NADH + (n+1) H(+)(in) = a plastoquinol + NAD(+) + n H(+)(out). The enzyme catalyses a plastoquinone + NADPH + (n+1) H(+)(in) = a plastoquinol + NADP(+) + n H(+)(out). Its function is as follows. NDH shuttles electrons from NAD(P)H:plastoquinone, via FMN and iron-sulfur (Fe-S) centers, to quinones in the photosynthetic chain and possibly in a chloroplast respiratory chain. The immediate electron acceptor for the enzyme in this species is believed to be plastoquinone. Couples the redox reaction to proton translocation, and thus conserves the redox energy in a proton gradient. This chain is NAD(P)H-quinone oxidoreductase subunit 6, chloroplastic (ndhG), found in Staurastrum punctulatum (Green alga).